A 516-amino-acid chain; its full sequence is Replication factor C large subunit (516 aa).

Residue G44–T51 coordinates ATP. The segment at R421–M516 is disordered. The segment covering V454–V467 has biased composition (basic and acidic residues). Positions Q479–D496 are enriched in low complexity. Acidic residues predominate over residues A497–G508.

It belongs to the activator 1 small subunits family. RfcL subfamily. Heteromultimer composed of small subunits (RfcS) and large subunits (RfcL).

Functionally, part of the RFC clamp loader complex which loads the PCNA sliding clamp onto DNA. This Haloquadratum walsbyi (strain DSM 16790 / HBSQ001) protein is Replication factor C large subunit.